We begin with the raw amino-acid sequence, 414 residues long: Tyrosine--tRNA ligase (414 aa).

Y35 lines the L-tyrosine pocket. The 'HIGH' region motif lies at 40–49 (PTADSLHVGH). Residues Y164 and Q168 each coordinate L-tyrosine. The 'KMSKS' region motif lies at 226-230 (KFGKT). K229 lines the ATP pocket. An S4 RNA-binding domain is found at 347–414 (TKVIDALVEL…KKKYFVILVK (68 aa)).

Belongs to the class-I aminoacyl-tRNA synthetase family. TyrS type 1 subfamily. Homodimer.

It localises to the cytoplasm. It catalyses the reaction tRNA(Tyr) + L-tyrosine + ATP = L-tyrosyl-tRNA(Tyr) + AMP + diphosphate + H(+). Its function is as follows. Catalyzes the attachment of tyrosine to tRNA(Tyr) in a two-step reaction: tyrosine is first activated by ATP to form Tyr-AMP and then transferred to the acceptor end of tRNA(Tyr). The sequence is that of Tyrosine--tRNA ligase from Mycoplasma capricolum subsp. capricolum (strain California kid / ATCC 27343 / NCTC 10154).